Here is an 865-residue protein sequence, read N- to C-terminus: Alanine--tRNA ligase (865 aa).

Residues His-554, His-558, Cys-656, and His-660 each contribute to the Zn(2+) site.

This sequence belongs to the class-II aminoacyl-tRNA synthetase family. Zn(2+) serves as cofactor.

The protein resides in the cytoplasm. It catalyses the reaction tRNA(Ala) + L-alanine + ATP = L-alanyl-tRNA(Ala) + AMP + diphosphate. Functionally, catalyzes the attachment of alanine to tRNA(Ala) in a two-step reaction: alanine is first activated by ATP to form Ala-AMP and then transferred to the acceptor end of tRNA(Ala). Also edits incorrectly charged Ser-tRNA(Ala) and Gly-tRNA(Ala) via its editing domain. This is Alanine--tRNA ligase from Francisella tularensis subsp. tularensis (strain WY96-3418).